The following is a 242-amino-acid chain: Triosephosphate isomerase (242 aa).

8–10 (NWK) is a substrate binding site. The Electrophile role is filled by His-98. Glu-167 acts as the Proton acceptor in catalysis. Residues Gly-173, Ser-205, and 226–227 (GG) contribute to the substrate site.

It belongs to the triosephosphate isomerase family. As to quaternary structure, homodimer.

Its subcellular location is the cytoplasm. The catalysed reaction is D-glyceraldehyde 3-phosphate = dihydroxyacetone phosphate. The protein operates within carbohydrate biosynthesis; gluconeogenesis. Its pathway is carbohydrate degradation; glycolysis; D-glyceraldehyde 3-phosphate from glycerone phosphate: step 1/1. Involved in the gluconeogenesis. Catalyzes stereospecifically the conversion of dihydroxyacetone phosphate (DHAP) to D-glyceraldehyde-3-phosphate (G3P). This chain is Triosephosphate isomerase, found in Mesomycoplasma hyopneumoniae (strain 7448) (Mycoplasma hyopneumoniae).